The chain runs to 566 residues: Serine/threonine-protein kinase ppk14 (566 aa).

Positions 1 to 31 (MNELHDGESSEEGRINVEDHLEEAKKDDTGH) are enriched in basic and acidic residues. Disordered regions lie at residues 1-39 (MNEL…GTAK) and 60-152 (SRKK…EKLK). A compositionally biased stretch (polar residues) spans 74–85 (AANQSPSGAPES). Residues 119-129 (SFFKSGRKKKD) are compositionally biased toward basic residues. Positions 134-145 (RNVSRSNGADTS) are enriched in polar residues. The Protein kinase domain maps to 195-485 (FEKVFLLGKG…AADVKLHPFF (291 aa)). ATP contacts are provided by residues 201–209 (LGKGDVGRV) and lysine 224. Aspartate 320 (proton acceptor) is an active-site residue. The residue at position 379 (threonine 379) is a Phosphothreonine. Serine 381 is subject to Phosphoserine. Threonine 385 bears the Phosphothreonine mark.

Belongs to the protein kinase superfamily. Ser/Thr protein kinase family. KIN82 subfamily.

It catalyses the reaction L-seryl-[protein] + ATP = O-phospho-L-seryl-[protein] + ADP + H(+). The enzyme catalyses L-threonyl-[protein] + ATP = O-phospho-L-threonyl-[protein] + ADP + H(+). This Schizosaccharomyces pombe (strain 972 / ATCC 24843) (Fission yeast) protein is Serine/threonine-protein kinase ppk14 (ppk14).